Consider the following 326-residue polypeptide: Methyltransferase phqN (326 aa).

It belongs to the class I-like SAM-binding methyltransferase superfamily. Erg6/SMT family.

Its pathway is alkaloid biosynthesis. Its function is as follows. Methyltransferase; part of the gene cluster that mediates the biosynthesis of paraherquamide, a fungal indole alkaloid that belongs to a family of natural products containing a characteristic bicyclo[2.2.2]diazaoctane core. The first steps in the biosynthesis of paraherquamide is the production of the beta-methyl-proline precursor from L-isoleucine. They require oxidation of a terminally hydroxylated L-isoleucine to the corresponding aldehyde by enzymes which have still to be identified. Spontaneous cyclization and dehydration would yield the 4-methyl pyrolline-5-carboxylic acid, which is then reduced by the pyrroline-5-carboxylate reductase phqD leading to the beta-methyl-proline precursor. The next step of paraherquamide biosynthesis involves coupling of beta-methyl-proline and L-tryptophan by the bimodular NRPS phqB, to produce a monooxopiperazine intermediate. The reductase (R) domain of phqB utilizes NADPH for hydride transfer to reduce the thioester bond of the T domain-tethered linear dipeptide to a hemithioaminal intermediate, which spontaneously cleaves the C-S bond to release the aldehyde product. This compound undergoes spontaneous cyclization and dehydration to give a dienamine which is reverse prenylated at C-2 by the reverse prenyltransferase phqJ. The other prenyltransferase present in the cluster, phqI may be a redundant gene in the pathway. During biosynthetic assembly, the key step to produce the polycyclic core is catalyzed by the bifunctional reductase and intramolecular [4+2] Diels-Alderase, phqE, resulting in formation of the [2.2.2] diazaoctane intermediate preparaherquamide. Following formation of preparaherquamide, an indole 2,3-epoxidation-initiated pinacol-like rearrangement is catalyzed by the phqK FAD-dependent monooxygenase. The prenyltransferase phqA, the cytochrome P450 monooxygenase phqL, and the FAD-linked oxidoreductase phqH (or the cytochrome P450 monooxygenase phqM), are proposed to be involved in the formation of the pyran ring. The FAD-dependent monooxygenase phqK is likely responsible for generation of the spiro-oxindole, and the N-methylation is likely mediated by the phqN methyltransferase leading to the isolable natural product paraherquamide F. However, the order of these biosynthetic steps has still to be determined. In late-stage paraherquamide biosynthesis, the third P450 monooxygenase, phqO, is probably responsible for the C-14 hydroxylation, transforming paraherquamide F to paraherquamide G, and paraherquamide E to the final product paraherquamide A. The expansion from the 6-membered ring pyran (in paraherquamides F and G) to the 7-membered dioxepin ring (in paraherquamides A and E) represents a poorly understood but intriguing process that probably involves the 2-oxoglutarate-dependent dioxygenase phqC. Finally, the remaining members of the paraherquamide cluster, including phqI as well as phqM (or phqH), do not have a clearly prescribed role and appear to be redundant. In Penicillium fellutanum, this protein is Methyltransferase phqN.